The sequence spans 291 residues: MFRGSIVALITPFRNGGIDERAFQDFVEWQIAEGTHGLVPVGTTGESTTLSHEEHRRVIQLCVEVSRGRVPVIAGTGSNSTEEAISLTRFAKEAGATAALVVTPYYNKPTQEGLYAHYKAIHDAVDLPIVIYNIPGRSVVDMSVATMARLAKLPNIVGVKDATGDLVRPLRTRIEIGPDFCQLSGEDATATAFLAQGGVGCISVTANVAPGLCARMQDAWARGDLAEMARVRDLLMPLHHALFVETSPGPVKYAASLLGKCAEDMRLPMVPPTQATRDVVRAALVKTGLLT.

Thr-44 contacts pyruvate. The active-site Proton donor/acceptor is Tyr-132. The active-site Schiff-base intermediate with substrate is the Lys-160. A pyruvate-binding site is contributed by Ile-202.

The protein belongs to the DapA family. Homotetramer; dimer of dimers.

It localises to the cytoplasm. It catalyses the reaction L-aspartate 4-semialdehyde + pyruvate = (2S,4S)-4-hydroxy-2,3,4,5-tetrahydrodipicolinate + H2O + H(+). Its pathway is amino-acid biosynthesis; L-lysine biosynthesis via DAP pathway; (S)-tetrahydrodipicolinate from L-aspartate: step 3/4. Its function is as follows. Catalyzes the condensation of (S)-aspartate-beta-semialdehyde [(S)-ASA] and pyruvate to 4-hydroxy-tetrahydrodipicolinate (HTPA). The protein is 4-hydroxy-tetrahydrodipicolinate synthase of Rhodospirillum centenum (strain ATCC 51521 / SW).